The chain runs to 357 residues: Elongation factor Ts (357 aa).

Residues 82–85 (TDFV) form an involved in Mg(2+) ion dislocation from EF-Tu region.

This sequence belongs to the EF-Ts family.

Its subcellular location is the cytoplasm. Its function is as follows. Associates with the EF-Tu.GDP complex and induces the exchange of GDP to GTP. It remains bound to the aminoacyl-tRNA.EF-Tu.GTP complex up to the GTP hydrolysis stage on the ribosome. The polypeptide is Elongation factor Ts (Campylobacter jejuni subsp. jejuni serotype O:6 (strain 81116 / NCTC 11828)).